We begin with the raw amino-acid sequence, 89 residues long: UPF0297 protein OB2008 (89 aa).

Belongs to the UPF0297 family.

This Oceanobacillus iheyensis (strain DSM 14371 / CIP 107618 / JCM 11309 / KCTC 3954 / HTE831) protein is UPF0297 protein OB2008.